Consider the following 329-residue polypeptide: Serine dehydratase-like (329 aa).

The residue at position 1 (Met1) is an N-acetylmethionine. At Lys48 the chain carries N6-(pyridoxal phosphate)lysine.

It belongs to the serine/threonine dehydratase family. Monomer. Homodimer. The cofactor is pyridoxal 5'-phosphate. In terms of tissue distribution, expressed in lung cancer cell lines.

The enzyme catalyses L-serine = pyruvate + NH4(+). It catalyses the reaction L-threonine = 2-oxobutanoate + NH4(+). It carries out the reaction L-glutamate = D-glutamate. In terms of biological role, catalyzes the pyridoxal-phosphate-dependent dehydrative deamination of L-threonine and L-serine to ammonia and alpha-ketobutyrate and pyruvate, respectively. Also exhibits racemase activity towards L-glutamate and D-glutamate. This chain is Serine dehydratase-like (SDSL), found in Homo sapiens (Human).